The following is a 118-amino-acid chain: Small ribosomal subunit protein uS13 (118 aa).

The tract at residues 94 to 118 is disordered; that stretch reads SLPLRGQRTKTNARTRKGPRKPIKK.

It belongs to the universal ribosomal protein uS13 family. In terms of assembly, part of the 30S ribosomal subunit. Forms a loose heterodimer with protein S19. Forms two bridges to the 50S subunit in the 70S ribosome.

In terms of biological role, located at the top of the head of the 30S subunit, it contacts several helices of the 16S rRNA. In the 70S ribosome it contacts the 23S rRNA (bridge B1a) and protein L5 of the 50S subunit (bridge B1b), connecting the 2 subunits; these bridges are implicated in subunit movement. Contacts the tRNAs in the A and P-sites. The chain is Small ribosomal subunit protein uS13 from Alteromonas mediterranea (strain DSM 17117 / CIP 110805 / LMG 28347 / Deep ecotype).